Reading from the N-terminus, the 204-residue chain is High frequency lysogenization protein HflD homolog (204 aa).

The protein belongs to the HflD family.

It localises to the cytoplasm. The protein localises to the cell inner membrane. The protein is High frequency lysogenization protein HflD homolog of Ruthia magnifica subsp. Calyptogena magnifica.